The following is a 478-amino-acid chain: Cysteine protease ATG4B (478 aa).

Positions 1-15 (MTSLPDRGVSSSSSD) are enriched in polar residues. Residues 1–31 (MTSLPDRGVSSSSSDPLCEGNIAPCSSSSEQ) are disordered. The active-site Nucleophile is the cysteine 164. Active-site residues include aspartate 361 and histidine 363.

This sequence belongs to the peptidase C54 family. Interacts with ATG8.

The protein localises to the cytoplasm. The catalysed reaction is [protein]-C-terminal L-amino acid-glycyl-phosphatidylethanolamide + H2O = [protein]-C-terminal L-amino acid-glycine + a 1,2-diacyl-sn-glycero-3-phosphoethanolamine. In terms of biological role, cysteine protease that plays a key role in autophagy by mediating both proteolytic activation and delipidation of ATG8 family proteins. The protease activity is required for proteolytic activation of ATG8 family proteins: cleaves the C-terminal amino acid of ATG8 proteins to reveal a C-terminal glycine. Exposure of the glycine at the C-terminus is essential for ATG8 proteins conjugation to phosphatidylethanolamine (PE) and insertion to membranes, which is necessary for autophagy. In addition to the protease activity, also mediates delipidation of PE-conjugated ATG8 proteins. The chain is Cysteine protease ATG4B (ATG4B) from Oryza sativa subsp. japonica (Rice).